A 322-amino-acid polypeptide reads, in one-letter code: uncharacterized protein (322 aa).

The next 5 membrane-spanning stretches (helical) occupy residues 159-179 (GIIF…MLYL), 203-223 (MNIP…YIWL), 234-254 (GGIL…RVGL), 267-287 (FEGS…LIPY), and 296-316 (TLLS…FFAW).

Its subcellular location is the membrane. This is an uncharacterized protein from Dictyostelium discoideum (Social amoeba).